The primary structure comprises 301 residues: tRNA pseudouridine synthase B (301 aa).

D48 functions as the Nucleophile in the catalytic mechanism.

The protein belongs to the pseudouridine synthase TruB family. Type 1 subfamily.

It carries out the reaction uridine(55) in tRNA = pseudouridine(55) in tRNA. Its function is as follows. Responsible for synthesis of pseudouridine from uracil-55 in the psi GC loop of transfer RNAs. The sequence is that of tRNA pseudouridine synthase B from Mycobacterium ulcerans (strain Agy99).